The primary structure comprises 658 residues: Protein teflon (658 aa).

Residues 33-56 form a C2H2-type 1 zinc finger; it reads LYCHFCRDLFTQLPEFLRHLQSNH. The segment at 80–131 is disordered; sequence DKAHEDAQSAGHNSSSGDSRSLMNSEDSRAIDGSEENSDNSPVKPEQIGKQN. Polar residues predominate over residues 89–104; that stretch reads AGHNSSSGDSRSLMNS. 2 consecutive C2H2-type zinc fingers follow at residues 608-630 and 634-657; these read YFCK…LISH and FQCT…RNAH.

Belongs to the Teflon family.

The protein resides in the nucleus. Its subcellular location is the chromosome. Specifically required in males for proper segregation of autosomal bivalents at meiosis I. Expression is required in the male germ line prior to spermatocyte stage S4. May have a role as a bridging molecule maintaining adhesion to hold autosome bivalents together via heterochromatic connections. The sequence is that of Protein teflon from Drosophila simulans (Fruit fly).